We begin with the raw amino-acid sequence, 241 residues long: Methylosome subunit pICln (241 aa).

Positions 88-112 (EDKEAHMADQEEEESEDDDDDEEPI) are disordered. Residues 97-112 (QEEEESEDDDDDEEPI) are compositionally biased toward acidic residues.

This sequence belongs to the pICln (TC 1.A.47) family. In terms of assembly, component of the methylosome, a 20S complex containing at least clns1a/picln, prmt5/skb1 and wdr77/mep50; may mediate snrpd1 and snrpd3 methylation. Forms a 6S pICln-Sm complex composed of clns1a/picln, snrpd1, snrpd2, snrpe, snrpf and snrpg; ring-like structure where clns1a/pICln mimics additional Sm proteins and which is unable to assemble into the core snRNP.

Its subcellular location is the cytoplasm. The protein localises to the cytosol. It is found in the nucleus. It localises to the cytoskeleton. Functionally, involved in both the assembly of spliceosomal snRNPs and the methylation of Sm proteins. Chaperone that regulates the assembly of spliceosomal U1, U2, U4 and U5 small nuclear ribonucleoproteins (snRNPs), the building blocks of the spliceosome, and thereby plays an important role in the splicing of cellular pre-mRNAs. Most spliceosomal snRNPs contain a common set of Sm proteins SNRPB, SNRPD1, SNRPD2, SNRPD3, SNRPE, SNRPF and SNRPG that assemble in a heptameric protein ring on the Sm site of the small nuclear RNA to form the core snRNP (Sm core). In the cytosol, the Sm proteins SNRPD1, SNRPD2, SNRPE, SNRPF and SNRPG are trapped in an inactive 6S pICln-Sm complex by the chaperone CLNS1A that controls the assembly of the core snRNP. Dissociation by the SMN complex of CLNS1A from the trapped Sm proteins and their transfer to an SMN-Sm complex triggers the assembly of core snRNPs and their transport to the nucleus. The polypeptide is Methylosome subunit pICln (clns1a) (Xenopus laevis (African clawed frog)).